Reading from the N-terminus, the 374-residue chain is F-box/LRR-repeat protein 8 (374 aa).

One can recognise an F-box domain in the interval 2–48 (GELVDNLPEEVLALIFRDLPLRDLAVATRVCRAWAAAAANSTVWSDK).

As to quaternary structure, directly interacts with SKP1 and CUL1. In terms of tissue distribution, widely expressed during embryogenesis and in adult tissues.

Substrate-recognition component of the SCF (SKP1-CUL1-F-box protein)-type E3 ubiquitin ligase complex. The chain is F-box/LRR-repeat protein 8 (Fbxl8) from Mus musculus (Mouse).